A 520-amino-acid chain; its full sequence is Laccase-1 (520 aa).

The first 19 residues, 1 to 19, serve as a signal peptide directing secretion; the sequence is MRLSNALVLVAACISSVVA. Plastocyanin-like domains follow at residues 21–145, 157–305, and 375–488; these read TRTF…FIVY, VDDE…LTLA, and TVPV…FAEA. Positions 82 and 84 each coordinate Cu cation. Intrachain disulfides connect Cys-103–Cys-509 and Cys-135–Cys-229. A glycan (N-linked (GlcNAc...) asparagine) is linked at Asn-108. Cu cation is bound by residues His-127 and His-129. N-linked (GlcNAc...) asparagine glycosylation is found at Asn-239 and Asn-299. Residues His-417, His-420, His-422, His-470, Cys-471, His-472, and His-476 each contribute to the Cu cation site. Asn-492 carries N-linked (GlcNAc...) asparagine glycosylation.

Belongs to the multicopper oxidase family. Cu cation serves as cofactor.

The protein localises to the secreted. The enzyme catalyses 4 hydroquinone + O2 = 4 benzosemiquinone + 2 H2O. Its function is as follows. Lignin degradation and detoxification of lignin-derived products. In Agaricus bisporus (White button mushroom), this protein is Laccase-1 (lcc1).